Reading from the N-terminus, the 324-residue chain is Aspartate carbamoyltransferase catalytic subunit (324 aa).

Carbamoyl phosphate is bound by residues Arg65 and Thr66. Lys93 lines the L-aspartate pocket. Arg115, His145, and Gln148 together coordinate carbamoyl phosphate. Positions 178 and 233 each coordinate L-aspartate. Gly274 and Pro275 together coordinate carbamoyl phosphate.

It belongs to the aspartate/ornithine carbamoyltransferase superfamily. ATCase family. Heterododecamer (2C3:3R2) of six catalytic PyrB chains organized as two trimers (C3), and six regulatory PyrI chains organized as three dimers (R2).

The enzyme catalyses carbamoyl phosphate + L-aspartate = N-carbamoyl-L-aspartate + phosphate + H(+). It participates in pyrimidine metabolism; UMP biosynthesis via de novo pathway; (S)-dihydroorotate from bicarbonate: step 2/3. Catalyzes the condensation of carbamoyl phosphate and aspartate to form carbamoyl aspartate and inorganic phosphate, the committed step in the de novo pyrimidine nucleotide biosynthesis pathway. The sequence is that of Aspartate carbamoyltransferase catalytic subunit from Nitrosococcus oceani (strain ATCC 19707 / BCRC 17464 / JCM 30415 / NCIMB 11848 / C-107).